Reading from the N-terminus, the 621-residue chain is Type 2 DNA topoisomerase 6 subunit B (621 aa).

Residues Asn-48, Asp-80, 101–102, 111–118, and Lys-435 contribute to the ATP site; these read SR and GQQGIGIS.

It belongs to the TOP6B family. As to quaternary structure, homodimer. Heterotetramer of two Top6A and two Top6B chains.

The catalysed reaction is ATP-dependent breakage, passage and rejoining of double-stranded DNA.. Functionally, relaxes both positive and negative superturns and exhibits a strong decatenase activity. The chain is Type 2 DNA topoisomerase 6 subunit B from Methanosarcina acetivorans (strain ATCC 35395 / DSM 2834 / JCM 12185 / C2A).